Reading from the N-terminus, the 446-residue chain is Phosphoglucosamine mutase (446 aa).

Ser101 (phosphoserine intermediate) is an active-site residue. Residues Ser101, Asp240, Asp242, and Asp244 each contribute to the Mg(2+) site. Ser101 carries the phosphoserine modification.

It belongs to the phosphohexose mutase family. Requires Mg(2+) as cofactor. Post-translationally, activated by phosphorylation.

The enzyme catalyses alpha-D-glucosamine 1-phosphate = D-glucosamine 6-phosphate. Its function is as follows. Catalyzes the conversion of glucosamine-6-phosphate to glucosamine-1-phosphate. This chain is Phosphoglucosamine mutase, found in Pseudomonas putida (strain W619).